A 171-amino-acid polypeptide reads, in one-letter code: UPF0725 protein At3g25080 (171 aa).

The protein belongs to the UPF0725 (EMB2204) family.

This Arabidopsis thaliana (Mouse-ear cress) protein is UPF0725 protein At3g25080.